A 317-amino-acid polypeptide reads, in one-letter code: Putative 2-hydroxyacid dehydrogenase SAR2389 (317 aa).

NAD(+)-binding positions include 155-156 (EI), 234-236 (ASR), and Asp260. Residue Arg236 is part of the active site. Glu265 is a catalytic residue. His283 functions as the Proton donor in the catalytic mechanism. 283-286 (HIGN) contributes to the NAD(+) binding site.

This sequence belongs to the D-isomer specific 2-hydroxyacid dehydrogenase family.

The polypeptide is Putative 2-hydroxyacid dehydrogenase SAR2389 (Staphylococcus aureus (strain MRSA252)).